Reading from the N-terminus, the 263-residue chain is Ubiquinone/menaquinone biosynthesis C-methyltransferase UbiE (263 aa).

3 residues coordinate S-adenosyl-L-methionine: Thr-86, Asp-107, and Ser-152.

It belongs to the class I-like SAM-binding methyltransferase superfamily. MenG/UbiE family.

It carries out the reaction a 2-demethylmenaquinol + S-adenosyl-L-methionine = a menaquinol + S-adenosyl-L-homocysteine + H(+). It catalyses the reaction a 2-methoxy-6-(all-trans-polyprenyl)benzene-1,4-diol + S-adenosyl-L-methionine = a 5-methoxy-2-methyl-3-(all-trans-polyprenyl)benzene-1,4-diol + S-adenosyl-L-homocysteine + H(+). The protein operates within quinol/quinone metabolism; menaquinone biosynthesis; menaquinol from 1,4-dihydroxy-2-naphthoate: step 2/2. It participates in cofactor biosynthesis; ubiquinone biosynthesis. Functionally, methyltransferase required for the conversion of demethylmenaquinol (DMKH2) to menaquinol (MKH2) and the conversion of 2-polyprenyl-6-methoxy-1,4-benzoquinol (DDMQH2) to 2-polyprenyl-3-methyl-6-methoxy-1,4-benzoquinol (DMQH2). This chain is Ubiquinone/menaquinone biosynthesis C-methyltransferase UbiE, found in Brucella anthropi (strain ATCC 49188 / DSM 6882 / CCUG 24695 / JCM 21032 / LMG 3331 / NBRC 15819 / NCTC 12168 / Alc 37) (Ochrobactrum anthropi).